An 82-amino-acid chain; its full sequence is RNA-binding protein Hfq (82 aa).

One can recognise a Sm domain in the interval 11-71 (DTFLNHVRKT…ISTIMPGAPI (61 aa)).

The protein belongs to the Hfq family. As to quaternary structure, homohexamer.

Functionally, RNA chaperone that binds small regulatory RNA (sRNAs) and mRNAs to facilitate mRNA translational regulation in response to envelope stress, environmental stress and changes in metabolite concentrations. Also binds with high specificity to tRNAs. This Bradyrhizobium diazoefficiens (strain JCM 10833 / BCRC 13528 / IAM 13628 / NBRC 14792 / USDA 110) protein is RNA-binding protein Hfq.